A 248-amino-acid chain; its full sequence is PF03932 family protein CutC (248 aa).

It belongs to the CutC family. Homodimer.

It is found in the cytoplasm. The chain is PF03932 family protein CutC from Escherichia coli O157:H7.